A 377-amino-acid chain; its full sequence is Porphobilinogen deaminase (377 aa).

Cysteine 269 carries the post-translational modification S-(dipyrrolylmethanemethyl)cysteine.

The protein belongs to the HMBS family. Monomer. Dipyrromethane is required as a cofactor.

The enzyme catalyses 4 porphobilinogen + H2O = hydroxymethylbilane + 4 NH4(+). It participates in porphyrin-containing compound metabolism; protoporphyrin-IX biosynthesis; coproporphyrinogen-III from 5-aminolevulinate: step 2/4. Tetrapolymerization of the monopyrrole PBG into the hydroxymethylbilane pre-uroporphyrinogen in several discrete steps. This is Porphobilinogen deaminase from Micrococcus luteus (strain ATCC 4698 / DSM 20030 / JCM 1464 / CCM 169 / CCUG 5858 / IAM 1056 / NBRC 3333 / NCIMB 9278 / NCTC 2665 / VKM Ac-2230) (Micrococcus lysodeikticus).